Here is a 328-residue protein sequence, read N- to C-terminus: UPF0104 membrane protein AF_2231 (328 aa).

6 consecutive transmembrane segments (helical) span residues 31 to 51 (NWLL…LWAL), 116 to 136 (ILDS…TGFS), 139 to 159 (FGFK…YILY), 221 to 241 (LVTL…LVAL), 245 to 265 (AYFL…LVPL), and 277 to 297 (MAYL…VGLW).

This sequence belongs to the UPF0104 family.

It localises to the cell membrane. The sequence is that of UPF0104 membrane protein AF_2231 from Archaeoglobus fulgidus (strain ATCC 49558 / DSM 4304 / JCM 9628 / NBRC 100126 / VC-16).